We begin with the raw amino-acid sequence, 643 residues long: MDLYSELTAKYQTVPAIATEIINLEAILNLPKPTEAFMSDIHGEYNAFQHVLRNGSGNVKSKIRSCFRDEMTEATLQRFAFLVYYPSERMAAIHREMAGDDLQQWYLTTFRRLIRLLAFTATKYTRSKVRKAMAPEFVYITEELLYNDADTPDKLAYYWQIIRNLIVLEQADQWIAATCQTIQRLTVDHFHVVGDIYDRGPAPDQVVESLIRRDRRHSVDIQWGNHDILWIGAAAGSALCIANLVRISARYNNLSILEDVYGINLRHLARLAEQYYQDNPAFSPKMERSDRPITEAERLQITQIHQAIAMIQFKLEGPVIKRRPEFDMDHRLVLEKLAPDFSTIKLNGDTYTIENGCFATVDPADPYKLLPEEQEVIDSLVESFTHSEKLHRHMDFLLDHGSMYLRYNRNLLLHGCVPVDEDGNFIGLTIKGTTYTGRQLFDMLEANLRLAYSQPTENADLATDLMWYLWTGPNSPLFGKHDMTTFERYFISDPKAHVEGRNPYYHLRKDPEFIKKILAEFVLDPEVGHVINGHTPVKKGTDPIMANNKMIVIDGGFSKPYQKTTGIGGYTLLDNSYGMQLVTHQPFTTKADAIANLTDIISTRRVVETEARRRTVAETDIGTELQDEVEVLKRRLGELREEE.

It belongs to the FBPase class 3 family. It depends on Mn(2+) as a cofactor.

It catalyses the reaction beta-D-fructose 1,6-bisphosphate + H2O = beta-D-fructose 6-phosphate + phosphate. It functions in the pathway carbohydrate biosynthesis; gluconeogenesis. The sequence is that of Fructose-1,6-bisphosphatase class 3 from Lacticaseibacillus casei (strain BL23) (Lactobacillus casei).